Consider the following 938-residue polypeptide: Histone deacetylase 7 (938 aa).

The tract at residues 1–40 is disordered; sequence MHSPGAGCPALQPDTPGSQPQPMDLRVGQRPTVEPPPEPA. The segment at 1 to 121 is interaction with MEF2C; the sequence is MHSPGAGCPA…LAEVILKKQQ (121 aa). Transcription repression stretches follow at residues 2 to 254 and 241 to 533; these read HSPG…DGDR and GPNP…EHAG. The segment at 72–172 is interaction with MEF2A; sequence SMDPPMPELQ…LPTEPPEHFP (101 aa). The residue at position 132 (Ser132) is a Phosphoserine. Disordered stretches follow at residues 155–280, 331–361, 373–463, and 472–491; these read SFLP…HHGL, SGSG…APLQ, LIKP…DSVL, and RPLS…LSPE. Ser178 bears the Phosphoserine; by MARK2, MARK3 and PKD/PRKD1 mark. Positions 190–204 are enriched in basic and acidic residues; the sequence is KSLERRKNPLLRKES. Phosphoserine; by PKD/PRKD2 is present on Ser204. A compositionally biased stretch (low complexity) spans 220-235; that stretch reads SSPSSSSTPASGCSSP. A Phosphoserine; by PKD/PRKD1 modification is found at Ser344. Residues Ser350 and Ser398 each carry the phosphoserine modification. The span at 350–361 shows a compositional bias: low complexity; it reads SATASPLLAPLQ. Low complexity-rich tracts occupy residues 429–448 and 479–491; these read GRGS…EQQH and SSPA…LSPE. At Ser479 the chain carries Phosphoserine; by PKD/PRKD1. Ser480 is modified (phosphoserine). Positions 505–852 are histone deacetylase; the sequence is PATGLVYDSV…VAALLGNKVD (348 aa). Zn(2+) contacts are provided by Cys520, Cys522, and His528. The residue at position 582 (Ser582) is a Phosphoserine. Cys605 serves as a coordination point for Zn(2+). The active site involves His657. The segment at 864–938 is interaction with SIN3A; sequence NLSAIRSLEA…LVEEEEPMNL (75 aa). The Nuclear export signal signature appears at 904–938; the sequence is AEVEAVTALASLSVGILAEDRPSERLVEEEEPMNL.

It belongs to the histone deacetylase family. HD type 2 subfamily. In terms of assembly, interacts with HDAC1, HDAC2, HDAC3, HDAC4, HDAC5, NCOR1, NCOR2, SIN3A, SIN3B, RBBP4, RBBP7, MTA1L1, SAP30 and MBD3. Interacts with KAT5 and EDNRA. Interacts with the 14-3-3 protein YWHAE, MEF2A, MEF2B and MEF2C. Interacts with ZMYND15. Interacts with KDM5B. Interacts with PML. Interacts with FOXP3. Interacts with RARA. May be phosphorylated by CaMK1. Phosphorylated by the PKC kinases PKN1 and PKN2, impairing nuclear import. Phosphorylation at Ser-178 by MARK2, MARK3 and PRKD1 promotes interaction with 14-3-3 proteins and export from the nucleus. Phosphorylation at Ser-178 is a prerequisite for phosphorylation at Ser-204. Highly expressed in heart and lung. Expressed at intermediate level in muscle.

It is found in the nucleus. It localises to the cytoplasm. The enzyme catalyses N(6)-acetyl-L-lysyl-[histone] + H2O = L-lysyl-[histone] + acetate. It carries out the reaction N(6)-acetyl-L-lysyl-[protein] + H2O = L-lysyl-[protein] + acetate. Its activity is regulated as follows. Its activity is inhibited by Trichostatin A (TSA), a known histone deacetylase inhibitor. Its function is as follows. Responsible for the deacetylation of lysine residues on the N-terminal part of the core histones (H2A, H2B, H3 and H4). Histone deacetylation gives a tag for epigenetic repression and plays an important role in transcriptional regulation, cell cycle progression and developmental events. Histone deacetylases act via the formation of large multiprotein complexes. Involved in muscle maturation by repressing transcription of myocyte enhancer factors such as MEF2A, MEF2B and MEF2C. During muscle differentiation, it shuttles into the cytoplasm, allowing the expression of myocyte enhancer factors. Positively regulates the transcriptional repressor activity of FOXP3. Serves as a corepressor of RARA, causing its deacetylation and inhibition of RARE DNA element binding. In association with RARA, plays a role in the repression of microRNA-10a and thereby in the inflammatory response. Also acetylates non-histone proteins, such as ALKBH5. The sequence is that of Histone deacetylase 7 (Hdac7) from Mus musculus (Mouse).